A 149-amino-acid polypeptide reads, in one-letter code: Flagellar assembly factor FliW (149 aa).

Belongs to the FliW family. Interacts with translational regulator CsrA and flagellin(s).

The protein resides in the cytoplasm. In terms of biological role, acts as an anti-CsrA protein, binds CsrA and prevents it from repressing translation of its target genes, one of which is flagellin. Binds to flagellin and participates in the assembly of the flagellum. In Thermotoga maritima (strain ATCC 43589 / DSM 3109 / JCM 10099 / NBRC 100826 / MSB8), this protein is Flagellar assembly factor FliW.